Consider the following 545-residue polypeptide: Phenylalanine--tRNA ligase beta subunit (545 aa).

The 76-residue stretch at 268-343 (FLHKIQNVRE…MSIGYNNLEP (76 aa)) folds into the B5 domain. Asp321, Asp327, Glu330, and Asp331 together coordinate Mg(2+).

Belongs to the phenylalanyl-tRNA synthetase beta subunit family. Type 2 subfamily. As to quaternary structure, tetramer of two alpha and two beta subunits. It depends on Mg(2+) as a cofactor.

Its subcellular location is the cytoplasm. The enzyme catalyses tRNA(Phe) + L-phenylalanine + ATP = L-phenylalanyl-tRNA(Phe) + AMP + diphosphate + H(+). The sequence is that of Phenylalanine--tRNA ligase beta subunit from Saccharolobus islandicus (strain Y.N.15.51 / Yellowstone #2) (Sulfolobus islandicus).